Reading from the N-terminus, the 54-residue chain is Califin-B (54 aa).

A disulfide bridge connects residues C25 and C53. L36 is modified (leucine amide).

The protein belongs to the molluscan ELH family. This protein consists of a large 36-residue subunit, bound by a single disulfide-bond to a small 18-residue subunit.

It is found in the secreted. Injected in sexually mature animals califin B excites LB and LC cells of the abdominal ganglion and cause egg-laying. The chain is Califin-B from Aplysia californica (California sea hare).